A 205-amino-acid polypeptide reads, in one-letter code: Probable anaerobic dimethyl sulfoxide reductase chain YnfG (205 aa).

4Fe-4S ferredoxin-type domains lie at 5-33 (YGFF…LGPE), 59-89 (FAYY…KRED), and 90-119 (GFVV…YNAE). Residues Cys14, Cys17, Cys20, Cys24, Cys67, Cys70, Cys75, Cys79, Cys99, Cys102, Cys105, Cys109, Cys126, Cys129, Cys141, and Cys145 each coordinate [4Fe-4S] cluster. The segment at 183–205 (IKPNANSRPTGDTTGYLANPEEV) is disordered. Polar residues predominate over residues 186-195 (NANSRPTGDT).

The complex consists of three subunits: YnfF, the reductase; YnfG, an electron transfer protein, and YnfH, a membrane anchor protein. [4Fe-4S] cluster is required as a cofactor.

Its function is as follows. Electron transfer subunit of the terminal reductase during anaerobic growth on various sulfoxide and N-oxide compounds. The polypeptide is Probable anaerobic dimethyl sulfoxide reductase chain YnfG (ynfG) (Escherichia coli O6:H1 (strain CFT073 / ATCC 700928 / UPEC)).